An 875-amino-acid chain; its full sequence is GATOR2 complex protein MIOS (875 aa).

WD repeat units lie at residues 58-100, 111-155, 182-221, 223-261, 265-306, 320-360, and 395-437; these read SDTP…NSKF, KHAR…TPDI, GQND…QKMF, NTKA…KPVL, EQPK…TPIG, PCDN…SLAW, and RLRA…KQYT. A C4-type zinc finger spans residues 735–781; that stretch reads VSCNFCGKSISYSCSSVPHQGRGFSQYGVSGSPTKSKVTSCPGCRKP. Residues Cys737 and Cys740 each contribute to the Zn(2+) site. Ser759 and Ser766 each carry phosphoserine. Zn(2+) is bound by residues Cys775, Cys778, Cys788, Cys827, Cys830, His832, His835, His838, Cys849, Cys854, and Cys858. The segment at 782–863 adopts an RING-type; atypical zinc-finger fold; the sequence is LPRCALCLIN…CTCKCMQLDT (82 aa).

Belongs to the WD repeat mio family. Component of the GATOR2 subcomplex, composed of MIOS, SEC13, SEH1L, WDR24 and WDR59. The GATOR2 complex interacts with CASTOR1 and CASTOR2; the interaction is negatively regulated by arginine. CASTOR1 and CASTOR2 convey leucine availability via direct interaction with MIOS. The GATOR2 complex interacts with SESN1, SESN2 and SESN3; the interaction is negatively regulated by amino acids. Interacts with SAR1A and SAR1B; the interaction is direct, disrupted by leucine and mediates the interaction of SAR1A or SAR1B with the GATOR2 complex to negatively regulate the TORC1 signaling upon leucine deprivation. As to expression, widely expressed. In brain, expressed in neurons and glia (oligodendrocytes and astrocytes), with more abundance in neurons.

It is found in the lysosome membrane. The GATOR2 complex is negatively regulated by the upstream amino acid sensors CASTOR1 and SESN2, which sequester the GATOR2 complex in absence of amino acids. In the presence of abundant amino acids, GATOR2 is released from CASTOR1 and SESN2 and activated. Its function is as follows. As a component of the GATOR2 complex, functions as an activator of the amino acid-sensing branch of the mTORC1 signaling pathway. The GATOR2 complex indirectly activates mTORC1 through the inhibition of the GATOR1 subcomplex. GATOR2 probably acts as an E3 ubiquitin-protein ligase toward GATOR1. In the presence of abundant amino acids, the GATOR2 complex mediates ubiquitination of the NPRL2 core component of the GATOR1 complex, leading to GATOR1 inactivation. In the absence of amino acids, GATOR2 is inhibited, activating the GATOR1 complex. Within the GATOR2 complex, MIOS is required to prevent autoubiquitination of WDR24, the catalytic subunit of the complex. The GATOR2 complex is required for brain myelination. The sequence is that of GATOR2 complex protein MIOS from Mus musculus (Mouse).